We begin with the raw amino-acid sequence, 262 residues long: Phosphatidylglycerol--prolipoprotein diacylglyceryl transferase (262 aa).

3 helical membrane-spanning segments follow: residues 17-37 (LKVH…WILA), 57-77 (LVFY…ALFY), and 92-112 (IWEG…AMYA). Arginine 140 is an a 1,2-diacyl-sn-glycero-3-phospho-(1'-sn-glycerol) binding site. 2 consecutive transmembrane segments (helical) span residues 200-220 (MAVS…VEFV) and 234-254 (WLTM…VLLA).

Belongs to the Lgt family.

It localises to the cell inner membrane. The enzyme catalyses L-cysteinyl-[prolipoprotein] + a 1,2-diacyl-sn-glycero-3-phospho-(1'-sn-glycerol) = an S-1,2-diacyl-sn-glyceryl-L-cysteinyl-[prolipoprotein] + sn-glycerol 1-phosphate + H(+). Its pathway is protein modification; lipoprotein biosynthesis (diacylglyceryl transfer). Catalyzes the transfer of the diacylglyceryl group from phosphatidylglycerol to the sulfhydryl group of the N-terminal cysteine of a prolipoprotein, the first step in the formation of mature lipoproteins. The polypeptide is Phosphatidylglycerol--prolipoprotein diacylglyceryl transferase (Methylococcus capsulatus (strain ATCC 33009 / NCIMB 11132 / Bath)).